A 95-amino-acid chain; its full sequence is Acylphosphatase (95 aa).

The 89-residue stretch at 7–95 (RLTAWVLGTV…PKGEVGFRTR (89 aa)) folds into the Acylphosphatase-like domain. Catalysis depends on residues Arg22 and Asn40.

Belongs to the acylphosphatase family.

It catalyses the reaction an acyl phosphate + H2O = a carboxylate + phosphate + H(+). The sequence is that of Acylphosphatase (acyP) from Corynebacterium diphtheriae (strain ATCC 700971 / NCTC 13129 / Biotype gravis).